The sequence spans 334 residues: Protein-methionine-sulfoxide reductase catalytic subunit MsrP (334 aa).

Residues 1–44 (MKKNQFLKESDVTAESVFFMKRRQVLKALGISATALSLPHAAHA) constitute a signal peptide (tat-type signal). Mo-molybdopterin is bound by residues Asn-88, 91–92 (YE), Cys-146, Thr-181, Asn-233, Arg-238, and 249–251 (GIK).

This sequence belongs to the MsrP family. Heterodimer of a catalytic subunit (MsrP) and a heme-binding subunit (MsrQ). Mo-molybdopterin serves as cofactor. Post-translationally, predicted to be exported by the Tat system. The position of the signal peptide cleavage has not been experimentally proven.

Its subcellular location is the periplasm. It carries out the reaction L-methionyl-[protein] + a quinone + H2O = L-methionyl-(S)-S-oxide-[protein] + a quinol. It catalyses the reaction L-methionyl-[protein] + a quinone + H2O = L-methionyl-(R)-S-oxide-[protein] + a quinol. Its function is as follows. Part of the MsrPQ system that repairs oxidized periplasmic proteins containing methionine sulfoxide residues (Met-O), using respiratory chain electrons. Thus protects these proteins from oxidative-stress damage caused by reactive species of oxygen and chlorine generated by the host defense mechanisms. MsrPQ is essential for the maintenance of envelope integrity under bleach stress, rescuing a wide series of structurally unrelated periplasmic proteins from methionine oxidation, including the primary periplasmic chaperone SurA and the lipoprotein Pal. The catalytic subunit MsrP is non-stereospecific, being able to reduce both (R-) and (S-) diastereoisomers of methionine sulfoxide. The chain is Protein-methionine-sulfoxide reductase catalytic subunit MsrP from Escherichia coli (strain K12 / MC4100 / BW2952).